Here is a 590-residue protein sequence, read N- to C-terminus: Protein NRT1/ PTR FAMILY 8.5 (590 aa).

Residues 96-116 (ASDVMIWQGTCYITPLIGAVI) form a helical membrane-spanning segment. Threonine 126 is modified (phosphothreonine). 10 consecutive transmembrane segments (helical) span residues 130–150 (FSAIYFIGMALLTLSASLPVL), 168–188 (TVQYAVFFTGLYLIALGTGGI), 214–234 (FFNWFYFSINIGSFISSTLLV), 242–262 (WGLGFLIPTVFMGVSIASFFI), 365–385 (FPIWASGIVYSVLYSQISTLF), 401–421 (IPPASFGVFDTLIVLISIPIY), 445–465 (MGIGLFLSVLSIAAAAIVETV), 478–498 (IFWQIPQYILMGIAEVFFFIG), 524–544 (AVGSYLSSLILTLVAYFTALG), and 562–582 (FFWLLVSLGLVNIPVYALICV).

The protein belongs to the major facilitator superfamily. Proton-dependent oligopeptide transporter (POT/PTR) (TC 2.A.17) family. In terms of tissue distribution, expressed in shoots, roots, stems, leaves, flowers and siliques.

It localises to the membrane. In Arabidopsis thaliana (Mouse-ear cress), this protein is Protein NRT1/ PTR FAMILY 8.5 (NPF8.5).